The following is an 86-amino-acid chain: Large ribosomal subunit protein bL27 (86 aa).

The tract at residues 1–22 (MATKKAGGSSRNGRDSAGRRLG) is disordered.

This sequence belongs to the bacterial ribosomal protein bL27 family.

This chain is Large ribosomal subunit protein bL27, found in Rickettsia bellii (strain RML369-C).